The chain runs to 966 residues: Probable transport protein MmpL11 (966 aa).

Helical transmembrane passes span 13-33 (WLVFTGWLLALVPAVYLAMTQ), 188-208 (IILMVLVAVFGSLAAAAIPLA), 214-234 (VVITMGLVFVLSMHTTMSVFV), 235-255 (TSTVSMFGIALAVDYSLFILM), 279-299 (GLAVVLSGMTVIASLTGIYLI), 311-331 (AILAVAVAMLTSATLTPAVLA), 373-393 (ALAASTVLLVMAAPATLMVLG), 527-547 (TQPLVLVFVAVIAFLMLLISI), 557-577 (VLMTLLSVAAAYGSLVMVFQW), 595-615 (VPPLVLAMTFGLSMDYEIFLL), 646-666 (AALIMIAVFCGFAFAGMPLVA), and 668-688 (IGVACAVAIAVDATVVRLVLV).

The protein belongs to the resistance-nodulation-cell division (RND) (TC 2.A.6) family. MmpL subfamily.

It localises to the cell membrane. This is Probable transport protein MmpL11 (mmpL11) from Mycobacterium bovis (strain ATCC BAA-935 / AF2122/97).